We begin with the raw amino-acid sequence, 87 residues long: Small ribosomal subunit protein bS20 (87 aa).

The segment at 1 to 26 (MANTKSALKRIRQTATRTARNRAVTS) is disordered. Low complexity predominate over residues 13 to 23 (QTATRTARNRA).

Belongs to the bacterial ribosomal protein bS20 family.

Binds directly to 16S ribosomal RNA. The sequence is that of Small ribosomal subunit protein bS20 from Akkermansia muciniphila (strain ATCC BAA-835 / DSM 22959 / JCM 33894 / BCRC 81048 / CCUG 64013 / CIP 107961 / Muc).